Here is a 405-residue protein sequence, read N- to C-terminus: L-rhamnonate dehydratase (405 aa).

The substrate site is built by H33 and R59. Positions 226, 252, and 280 each coordinate Mg(2+). H329 acts as the Proton acceptor in catalysis. E349 lines the substrate pocket.

It belongs to the mandelate racemase/muconate lactonizing enzyme family. RhamD subfamily. As to quaternary structure, homooctamer; tetramer of dimers. The cofactor is Mg(2+).

The catalysed reaction is L-rhamnonate = 2-dehydro-3-deoxy-L-rhamnonate + H2O. In terms of biological role, catalyzes the dehydration of L-rhamnonate to 2-keto-3-deoxy-L-rhamnonate (KDR). In Escherichia coli O6:K15:H31 (strain 536 / UPEC), this protein is L-rhamnonate dehydratase.